A 185-amino-acid chain; its full sequence is Threonylcarbamoyl-AMP synthase (185 aa).

The 185-residue stretch at 1 to 185 (MKNFEQVLKA…AKTSQILRQG (185 aa)) folds into the YrdC-like domain. The disordered stretch occupies residues 163-185 (ETSGRNKPSEIRDAKTSQILRQG). A compositionally biased stretch (basic and acidic residues) spans 164–177 (TSGRNKPSEIRDAK).

It belongs to the SUA5 family. TsaC subfamily.

The protein localises to the cytoplasm. It catalyses the reaction L-threonine + hydrogencarbonate + ATP = L-threonylcarbamoyladenylate + diphosphate + H2O. In terms of biological role, required for the formation of a threonylcarbamoyl group on adenosine at position 37 (t(6)A37) in tRNAs that read codons beginning with adenine. Catalyzes the conversion of L-threonine, HCO(3)(-)/CO(2) and ATP to give threonylcarbamoyl-AMP (TC-AMP) as the acyladenylate intermediate, with the release of diphosphate. This is Threonylcarbamoyl-AMP synthase from Vibrio campbellii (strain ATCC BAA-1116).